We begin with the raw amino-acid sequence, 247 residues long: Large ribosomal subunit protein uL24m (247 aa).

The KOW domain occupies 84 to 117; sequence FFRGDRIEVLVGKDKGKQGIVTQVIPERNWVIVE.

It belongs to the universal ribosomal protein uL24 family. As to quaternary structure, component of the mitochondrial ribosome large subunit (39S) which comprises a 16S rRNA and about 50 distinct proteins.

Its subcellular location is the mitochondrion. This chain is Large ribosomal subunit protein uL24m (mRpL24), found in Drosophila pseudoobscura pseudoobscura (Fruit fly).